Here is a 258-residue protein sequence, read N- to C-terminus: Aquaglyceroporin (258 aa).

At 1-11 the chain is on the cytoplasmic side; that stretch reads MHMLFYKSYVR. The chain crosses the membrane as a helical span at residues 12 to 32; the sequence is EFIGEFLGTFVLMFLGEGATA. At 33 to 45 the chain is on the extracellular side; sequence NFHTTGLSGDWYK. The chain crosses the membrane as a helical span at residues 46 to 66; sequence LCLGWGLAVFFGILVSAKLSG. Glycerol contacts are provided by Gly66, Ala67, and Asn70. Over 67-87 the chain is Cytoplasmic; sequence AHLNLAVSIGLSSINKFDLKK. The helical transmembrane segment at 88–108 threads the bilayer; that stretch reads IPVYFFAQLLGAFVGTSTVYG. The Extracellular segment spans residues 109 to 135; the sequence is LYHGFISNSKIPQFAWETSRNPSISLT. Ser127 serves as a coordination point for glycerol. Residues 136 to 156 form a helical membrane-spanning segment; that stretch reads GAFFNELILTGILLLVILVVV. At 157-171 the chain is on the cytoplasmic side; sequence DENICGKFHILKLSS. Residues 172-192 form a helical membrane-spanning segment; that stretch reads VVGLIILCIGITFGGNTGFAL. 4 residues coordinate glycerol: Gly189, Phe190, Asn193, and Arg196. Residues 193–217 are Extracellular-facing; it reads NPSRDLGSRFLSLIAYGKDTFTKDN. A helical membrane pass occupies residues 218–238; that stretch reads FYFWVPLVAPCVGSVVFCQFY. The Cytoplasmic portion of the chain corresponds to 239 to 258; that stretch reads DKVICPLVDLANNEKDGVDL.

The protein belongs to the MIP/aquaporin (TC 1.A.8) family. As to quaternary structure, homotetramer.

Its subcellular location is the cell membrane. It catalyses the reaction H2O(in) = H2O(out). It carries out the reaction glycerol(in) = glycerol(out). The catalysed reaction is urea(in) = urea(out). The enzyme catalyses NH4(+)(in) = NH4(+)(out). It catalyses the reaction methylamine(out) = methylamine(in). It carries out the reaction formamide(out) = formamide(in). Mediates water and glycerol transport across the cell membrane. Permeable to sugar alcohols of up to five carbons and urea. Permeable to ammonia, methylamine and formamide. This is Aquaglyceroporin from Plasmodium falciparum (isolate 3D7).